The following is a 197-amino-acid chain: Small ribosomal subunit protein uS4B (197 aa).

Residues 88 to 150 (SRLDNMVYRM…SRKTEMFVNN (63 aa)) enclose the S4 RNA-binding domain.

The protein belongs to the universal ribosomal protein uS4 family. Part of the 30S ribosomal subunit. Contacts protein S5. The interaction surface between S4 and S5 is involved in control of translational fidelity.

Its function is as follows. One of the primary rRNA binding proteins, it binds directly to 16S rRNA where it nucleates assembly of the body of the 30S subunit. With S5 and S12 plays an important role in translational accuracy. The polypeptide is Small ribosomal subunit protein uS4B (Clostridium perfringens (strain ATCC 13124 / DSM 756 / JCM 1290 / NCIMB 6125 / NCTC 8237 / Type A)).